A 370-amino-acid chain; its full sequence is tRNA-specific 2-thiouridylase MnmA (370 aa).

ATP is bound by residues 11–18 and M37; that span reads GMSGGVDS. The interval 97–99 is interaction with target base in tRNA; it reads NPD. C102 serves as the catalytic Nucleophile. C102 and C199 are disulfide-bonded. ATP is bound at residue G126. The segment at 149–151 is interaction with tRNA; sequence KDQ. Residue C199 is the Cysteine persulfide intermediate of the active site. The tract at residues 307–308 is interaction with tRNA; sequence RY.

It belongs to the MnmA/TRMU family.

The protein resides in the cytoplasm. It carries out the reaction S-sulfanyl-L-cysteinyl-[protein] + uridine(34) in tRNA + AH2 + ATP = 2-thiouridine(34) in tRNA + L-cysteinyl-[protein] + A + AMP + diphosphate + H(+). In terms of biological role, catalyzes the 2-thiolation of uridine at the wobble position (U34) of tRNA, leading to the formation of s(2)U34. This chain is tRNA-specific 2-thiouridylase MnmA, found in Staphylococcus haemolyticus (strain JCSC1435).